The following is a 249-amino-acid chain: tRNA pseudouridine synthase A (249 aa).

Asp-52 (nucleophile) is an active-site residue. Tyr-110 provides a ligand contact to substrate.

It belongs to the tRNA pseudouridine synthase TruA family. Homodimer.

The enzyme catalyses uridine(38/39/40) in tRNA = pseudouridine(38/39/40) in tRNA. In terms of biological role, formation of pseudouridine at positions 38, 39 and 40 in the anticodon stem and loop of transfer RNAs. The protein is tRNA pseudouridine synthase A of Exiguobacterium sibiricum (strain DSM 17290 / CCUG 55495 / CIP 109462 / JCM 13490 / 255-15).